Reading from the N-terminus, the 511-residue chain is 2'-5'-oligoadenylate synthase-like protein 1 (511 aa).

2 consecutive Ubiquitin-like domains span residues 350 to 429 and 430 to 506; these read IQVT…ISPE and IQVF…EGAA.

This sequence belongs to the 2-5A synthase family. As to quaternary structure, specifically interacts with the ligand binding domain of the thyroid receptor (TR). TRIP14 does not require the presence of thyroid hormone for its interaction. Binds MBD1.

The protein localises to the nucleus. The protein resides in the nucleolus. Its subcellular location is the cytoplasm. Functionally, does not have 2'-5'-OAS activity, but can bind double-stranded RNA. Displays antiviral activity via an alternative antiviral pathway independent of RNase L. In Mus musculus (Mouse), this protein is 2'-5'-oligoadenylate synthase-like protein 1 (Oasl1).